Consider the following 149-residue polypeptide: Probable conjugal transfer protein TrbE part 1 (149 aa).

Belongs to the TrbE/VirB4 family.

In Sinorhizobium fredii (strain NBRC 101917 / NGR234), this protein is Probable conjugal transfer protein TrbE part 1 (trbEA).